Consider the following 375-residue polypeptide: MTPILFVDRDGTLITEPADYQIDAYEKLRFVDHVIPAMLKLRDAGYQFVIVSNQDGLGSESYPRASFEGPNNLMLQIFASQGIEFRDVLIDCSWPADNAPTRKPGIGLMVPYLQDRSIDWARSAMVGDRITDIQFAHNLNIRGFQLRTDEFGGEWDWPGIAHELADAPRRAVVQRNTKETRIRVELDLDRVAEPKTATGLPFFDHMLEQIGKHGGFALEIRAEGDLHIDEHHTIEDTGLALGQALREALGNKRGIGRYGFDPESSPWRVAGDKAQHGFTLPMDETIASAALDFSGRPYFVFDGEFKRERVGDMPTELVPHFFRSICDASGLNLHLTVRGENDHHKVEACFKALARALRQAIRREGTALPTTKGAL.

The histidinol-phosphatase stretch occupies residues 1–168 (MTPILFVDRD…GIAHELADAP (168 aa)). Asp8 functions as the Nucleophile in the catalytic mechanism. The Mg(2+) site is built by Asp8, Asp10, and Asp128. Residue Asp10 is the Proton donor of the active site. An imidazoleglycerol-phosphate dehydratase region spans residues 169 to 375 (RRAVVQRNTK…TALPTTKGAL (207 aa)).

It in the N-terminal section; belongs to the histidinol-phosphatase family. The protein in the C-terminal section; belongs to the imidazoleglycerol-phosphate dehydratase family. The cofactor is Mg(2+).

The protein localises to the cytoplasm. The enzyme catalyses D-erythro-1-(imidazol-4-yl)glycerol 3-phosphate = 3-(imidazol-4-yl)-2-oxopropyl phosphate + H2O. It carries out the reaction L-histidinol phosphate + H2O = L-histidinol + phosphate. It functions in the pathway amino-acid biosynthesis; L-histidine biosynthesis; L-histidine from 5-phospho-alpha-D-ribose 1-diphosphate: step 6/9. Its pathway is amino-acid biosynthesis; L-histidine biosynthesis; L-histidine from 5-phospho-alpha-D-ribose 1-diphosphate: step 8/9. The protein is Histidine biosynthesis bifunctional protein HisB of Xanthomonas euvesicatoria pv. vesicatoria (strain 85-10) (Xanthomonas campestris pv. vesicatoria).